The following is a 624-amino-acid chain: MTSLHQVLYFIFFASVSSECVTKVFKDISFQGGDLSTVFTPSATYCRLVCTHHPRCLLFTFMAESSSDDPTKWFACILKDSVTEILPMVNMTGAISGYSFKQCPQQLSTCSKDVYVNLDMKGMNYNSSVVKNARECQERCTDDAHCQFFTYATGYFPSVDHRKMCLLKYTRTGTPTTITKLNGVVSGFSLKSCGLSNLACIRDIFPNTVLADLNIDSVVAPDAFVCRRICTHHPTCLFFTFFSQAWPKESQRHLCLLKTSESGLPSTRITKSHALSGFSLQHCRHSVPVFCHPSFYNDTDFLGEELDIVDVKGQETCQKTCTNNARCQFFTYYPSHRLCNERNRRGRCYLKLSSNGSPTRILHGRGGISGYSLRLCKMDNVCTTKINPRVVGGAASVHGEWPWQVTLHISQGHLCGGSIIGNQWILTAAHCFSGIETPKKLRVYGGIVNQSEINEGTAFFRVQEMIIHDQYTTAESGYDIALLKLESAMNYTDFQRPICLPSKGDRNAVHTECWVTGWGYTALRGEVQSTLQKAKVPLVSNEECQTRYRRHKITNKMICAGYKEGGKDTCKGDSGGPLSCKYNGVWHLVGITSWGEGCGQKERPGVYTNVAKYVDWILEKTQTV.

The first 18 residues, 1 to 18 (MTSLHQVLYFIFFASVSS), serve as a signal peptide directing secretion. 4 Apple domains span residues 20–103 (CVTK…FKQC), 110–193 (CSKD…LKSC), 200–283 (CIRD…LQHC), and 291–376 (CHPS…LRLC). Intrachain disulfides connect cysteine 20–cysteine 103, cysteine 46–cysteine 76, cysteine 50–cysteine 56, cysteine 110–cysteine 193, cysteine 136–cysteine 165, cysteine 140–cysteine 146, cysteine 200–cysteine 283, cysteine 226–cysteine 255, cysteine 230–cysteine 236, cysteine 291–cysteine 376, cysteine 317–cysteine 348, cysteine 321–cysteine 327, cysteine 382–cysteine 499, cysteine 415–cysteine 431, cysteine 513–cysteine 580, cysteine 544–cysteine 559, and cysteine 570–cysteine 598. N-linked (GlcNAc...) asparagine glycans are attached at residues asparagine 90 and asparagine 126. Asparagine 297 carries N-linked (GlcNAc...) asparagine glycosylation. One can recognise a Peptidase S1 domain in the interval 390–622 (VVGGAASVHG…YVDWILEKTQ (233 aa)). Histidine 430 functions as the Charge relay system in the catalytic mechanism. The N-linked (GlcNAc...) asparagine glycan is linked to asparagine 449. The active-site Charge relay system is the aspartate 479. N-linked (GlcNAc...) asparagine glycosylation occurs at asparagine 490. Residue 547 to 550 (RYRR) coordinates heparin. The active-site Charge relay system is serine 574.

The protein belongs to the peptidase S1 family. Plasma kallikrein subfamily. In terms of assembly, homodimer; disulfide-linked. After activation the heavy and light chains are also linked by a disulfide bond. Interacts (activated) with F9 (inactive and activated) in calcium-dependent manner. Forms a heterodimer with SERPINA5. Activated by factor XIIa (or XII), which cleaves each polypeptide after Arg-389 into the light chain, which contains the active site, and the heavy chain, which associates with high molecular weight (HMW) kininogen. Activated by F12 (activated); the presence of negatively charged surfaces accelerates activation. Activated by F2 (thrombin); the presence of negatively charged surfaces, such as polyphosphate and dextran sulfate, strongly accelerates activation. Autoactivated; the presence of negatively charged surfaces, such as polyphosphate and dextran sulfate, accelerates autoactivation and autolysis. Post-translationally, N-glycosylated on both chains. N-glycosylated sites mainly consist of nonfucosylated sialylated biantennary (in high abundance) and/or triantennary (in low abundance) complex structures.

It is found in the secreted. It catalyses the reaction Selective cleavage of Arg-|-Ala and Arg-|-Val bonds in factor IX to form factor IXa.. With respect to regulation, inhibited by SERPINA5. Functionally, factor XI triggers the middle phase of the intrinsic pathway of blood coagulation by activating factor IX. This chain is Coagulation factor XI (F11), found in Mus musculus (Mouse).